The sequence spans 287 residues: Pantothenate synthetase (287 aa).

Residue Met-30 to His-37 coordinates ATP. The active-site Proton donor is the His-37. Residue Gln-61 coordinates (R)-pantoate. Gln-61 is a binding site for beta-alanine. Position 148-151 (Gly-148–Asp-151) interacts with ATP. Residue Gln-154 coordinates (R)-pantoate. ATP contacts are provided by residues Ile-177 and Leu-185–Arg-188.

It belongs to the pantothenate synthetase family. As to quaternary structure, homodimer.

The protein resides in the cytoplasm. It catalyses the reaction (R)-pantoate + beta-alanine + ATP = (R)-pantothenate + AMP + diphosphate + H(+). The protein operates within cofactor biosynthesis; (R)-pantothenate biosynthesis; (R)-pantothenate from (R)-pantoate and beta-alanine: step 1/1. Its function is as follows. Catalyzes the condensation of pantoate with beta-alanine in an ATP-dependent reaction via a pantoyl-adenylate intermediate. In Psychrobacter cryohalolentis (strain ATCC BAA-1226 / DSM 17306 / VKM B-2378 / K5), this protein is Pantothenate synthetase.